The chain runs to 343 residues: tRNA N6-adenosine threonylcarbamoyltransferase (343 aa).

Fe cation contacts are provided by His111 and His115. Residues 135 to 139 (VLSGG), Asp168, Gly181, and Asn280 each bind substrate. A Fe cation-binding site is contributed by Asp306.

This sequence belongs to the KAE1 / TsaD family. Fe(2+) is required as a cofactor.

Its subcellular location is the cytoplasm. It catalyses the reaction L-threonylcarbamoyladenylate + adenosine(37) in tRNA = N(6)-L-threonylcarbamoyladenosine(37) in tRNA + AMP + H(+). In terms of biological role, required for the formation of a threonylcarbamoyl group on adenosine at position 37 (t(6)A37) in tRNAs that read codons beginning with adenine. Is involved in the transfer of the threonylcarbamoyl moiety of threonylcarbamoyl-AMP (TC-AMP) to the N6 group of A37, together with TsaE and TsaB. TsaD likely plays a direct catalytic role in this reaction. In Protochlamydia amoebophila (strain UWE25), this protein is tRNA N6-adenosine threonylcarbamoyltransferase.